Consider the following 1199-residue polypeptide: Tubulin monoglutamylase TTLL4 (1199 aa).

The span at 1 to 25 (MASAGTQHYSIGLRQKNSFKQSGPS) shows a compositional bias: polar residues. Disordered stretches follow at residues 1 to 43 (MASA…RVWP), 472 to 517 (IQLG…ELVD), and 525 to 544 (RDENEEEEGDSECSSLSAVS). Residues 477 to 495 (SEKERPEEARELDSSDRDI) show a composition bias toward basic and acidic residues. Residues 506–517 (AETEDTEEELVD) show a composition bias toward acidic residues. In terms of domain architecture, TTL spans 604 to 947 (RKLLRWKMST…VLPNAEDIIS (344 aa)). At Ser691 the chain carries Phosphoserine. ATP is bound by residues Lys721, 727–728 (RG), 749–752 (QRYL), and 762–764 (KFD). Arg727 is a binding site for a protein. Arg788 is a binding site for L-glutamate. An ATP-binding site is contributed by 809 to 810 (TN). 3 residues coordinate L-glutamate: Tyr811, Ser812, and Lys833. Mg(2+)-binding residues include Asp893, Glu906, and Asn908. The segment at 918–1029 (PLDISIKGQM…RGQFERIFPS (112 aa)) is c-MTBD region. Lys924 serves as a coordination point for L-glutamate. Polar residues predominate over residues 1130 to 1141 (GTTPKSKKTQAG). Residues 1130–1199 (GTTPKSKKTQ…ISDSLLAVSP (70 aa)) form a disordered region. The segment covering 1151-1160 (SSKDSEDTSK) has biased composition (basic and acidic residues). The segment covering 1164 to 1192 (LSTQTLPVIKCSGQTSRLSASSTFQSISD) has biased composition (polar residues).

This sequence belongs to the tubulin--tyrosine ligase family. Mg(2+) is required as a cofactor.

The protein localises to the cytoplasm. It is found in the cell projection. Its subcellular location is the cilium. It localises to the cytoskeleton. The protein resides in the cilium basal body. The enzyme catalyses L-glutamyl-[protein] + L-glutamate + ATP = gamma-L-glutamyl-L-glutamyl-[protein] + ADP + phosphate + H(+). Monoglutamylase which modifies both tubulin and non-tubulin proteins, adding a single glutamate on the gamma-carboxyl group of specific glutamate residues of target proteins. Involved in the side-chain initiation step of the polyglutamylation reaction but not in the elongation step. Preferentially modifies beta-tail tubulin over the alpha-tubulin. Monoglutamylates nucleosome assembly proteins NAP1L1 and NAP1L4. Monoglutamylates nucleotidyltransferase CGAS, leading to inhibition of CGAS catalytic activity, thereby preventing antiviral defense function. Involved in KLF4 glutamylation which impedes its ubiquitination, thereby leading to somatic cell reprogramming, pluripotency maintenance and embryogenesis. The polypeptide is Tubulin monoglutamylase TTLL4 (Homo sapiens (Human)).